The following is a 734-amino-acid chain: Cytosolic endo-beta-N-acetylglucosaminidase (734 aa).

M1 carries the N-acetylmethionine modification. The segment at 1-45 (METSSVLTRGAARQRSPAAPEKQARDQTERRPGRRRQGRRINEDQ) is disordered. Residues 22–31 (KQARDQTERR) are compositionally biased toward basic and acidic residues. Positions 281–375 (QNRVFFDSCD…DFFQNQDKFW (95 aa)) constitute a BRCT domain.

The protein belongs to the glycosyl hydrolase 85 family.

The protein localises to the cytoplasm. It is found in the cytosol. It catalyses the reaction an N(4)-(oligosaccharide-(1-&gt;3)-[oligosaccharide-(1-&gt;6)]-beta-D-Man-(1-&gt;4)-beta-D-GlcNAc-(1-&gt;4)-alpha-D-GlcNAc)-L-asparaginyl-[protein] + H2O = an oligosaccharide-(1-&gt;3)-[oligosaccharide-(1-&gt;6)]-beta-D-Man-(1-&gt;4)-D-GlcNAc + N(4)-(N-acetyl-beta-D-glucosaminyl)-L-asparaginyl-[protein]. Functionally, endoglycosidase that releases N-glycans from glycoproteins by cleaving the beta-1,4-glycosidic bond in the N,N'-diacetylchitobiose core. Involved in the processing of free oligosaccharides in the cytosol. The chain is Cytosolic endo-beta-N-acetylglucosaminidase (Engase) from Mus musculus (Mouse).